A 281-amino-acid polypeptide reads, in one-letter code: ATP synthase gamma chain (281 aa).

This sequence belongs to the ATPase gamma chain family. F-type ATPases have 2 components, CF(1) - the catalytic core - and CF(0) - the membrane proton channel. CF(1) has five subunits: alpha(3), beta(3), gamma(1), delta(1), epsilon(1). CF(0) has three main subunits: a, b and c.

The protein resides in the cell membrane. Its function is as follows. Produces ATP from ADP in the presence of a proton gradient across the membrane. The gamma chain is believed to be important in regulating ATPase activity and the flow of protons through the CF(0) complex. The chain is ATP synthase gamma chain from Clostridium pasteurianum.